We begin with the raw amino-acid sequence, 286 residues long: Phosphatidylserine decarboxylase proenzyme (286 aa).

Active-site charge relay system; for autoendoproteolytic cleavage activity residues include Asp-90, His-147, and Ser-252. The active-site Schiff-base intermediate with substrate; via pyruvic acid; for decarboxylase activity is Ser-252. Ser-252 is subject to Pyruvic acid (Ser); by autocatalysis.

The protein belongs to the phosphatidylserine decarboxylase family. PSD-B subfamily. Prokaryotic type I sub-subfamily. As to quaternary structure, heterodimer of a large membrane-associated beta subunit and a small pyruvoyl-containing alpha subunit. Requires pyruvate as cofactor. In terms of processing, is synthesized initially as an inactive proenzyme. Formation of the active enzyme involves a self-maturation process in which the active site pyruvoyl group is generated from an internal serine residue via an autocatalytic post-translational modification. Two non-identical subunits are generated from the proenzyme in this reaction, and the pyruvate is formed at the N-terminus of the alpha chain, which is derived from the carboxyl end of the proenzyme. The autoendoproteolytic cleavage occurs by a canonical serine protease mechanism, in which the side chain hydroxyl group of the serine supplies its oxygen atom to form the C-terminus of the beta chain, while the remainder of the serine residue undergoes an oxidative deamination to produce ammonia and the pyruvoyl prosthetic group on the alpha chain. During this reaction, the Ser that is part of the protease active site of the proenzyme becomes the pyruvoyl prosthetic group, which constitutes an essential element of the active site of the mature decarboxylase.

The protein resides in the cell membrane. It catalyses the reaction a 1,2-diacyl-sn-glycero-3-phospho-L-serine + H(+) = a 1,2-diacyl-sn-glycero-3-phosphoethanolamine + CO2. The protein operates within phospholipid metabolism; phosphatidylethanolamine biosynthesis; phosphatidylethanolamine from CDP-diacylglycerol: step 2/2. In terms of biological role, catalyzes the formation of phosphatidylethanolamine (PtdEtn) from phosphatidylserine (PtdSer). The polypeptide is Phosphatidylserine decarboxylase proenzyme (Pseudomonas fluorescens (strain Pf0-1)).